Consider the following 424-residue polypeptide: Protein UL117 (424 aa).

Residues Ile57 to Pro82 form a disordered region.

This sequence belongs to the herpesviridae U84 family.

It localises to the host nucleus. Its function is as follows. Plays a role in the inhibition of host DNA replication in the infected cell. Targets the mini-chromosome maintenance (MCM) complex and blocks the accumulation of MCM proteins and their loading onto host chromatin. The protein is Protein UL117 (UL117) of Human cytomegalovirus (strain AD169) (HHV-5).